The chain runs to 557 residues: Urocanate hydratase (557 aa).

NAD(+)-binding positions include 53–54 (GG), Gln-131, 177–179 (GMG), Glu-197, Arg-202, 243–244 (NA), 264–268 (QTSAH), 274–275 (YL), and Tyr-323. The active site involves Cys-411. Residue Gly-493 coordinates NAD(+).

This sequence belongs to the urocanase family. It depends on NAD(+) as a cofactor.

The protein resides in the cytoplasm. It catalyses the reaction 4-imidazolone-5-propanoate = trans-urocanate + H2O. It participates in amino-acid degradation; L-histidine degradation into L-glutamate; N-formimidoyl-L-glutamate from L-histidine: step 2/3. Its function is as follows. Catalyzes the conversion of urocanate to 4-imidazolone-5-propionate. This is Urocanate hydratase from Pseudomonas entomophila (strain L48).